We begin with the raw amino-acid sequence, 94 residues long: UPF0337 protein NE2439 (94 aa).

A disordered region spans residues 74–94 (KNVGEAVSSRQKSVKKRSLYT). Residues 85–94 (KSVKKRSLYT) are compositionally biased toward basic residues.

It belongs to the UPF0337 (CsbD) family.

In Nitrosomonas europaea (strain ATCC 19718 / CIP 103999 / KCTC 2705 / NBRC 14298), this protein is UPF0337 protein NE2439.